Here is a 561-residue protein sequence, read N- to C-terminus: Type 2 DNA topoisomerase 6 subunit B (561 aa).

Residues N46, D78, 99 to 100 (TK), 109 to 116 (GQQGIGIS), and K471 contribute to the ATP site.

It belongs to the TOP6B family. As to quaternary structure, homodimer. Heterotetramer of two Top6A and two Top6B chains.

The catalysed reaction is ATP-dependent breakage, passage and rejoining of double-stranded DNA.. In terms of biological role, relaxes both positive and negative superturns and exhibits a strong decatenase activity. This Thermococcus gammatolerans (strain DSM 15229 / JCM 11827 / EJ3) protein is Type 2 DNA topoisomerase 6 subunit B.